A 274-amino-acid polypeptide reads, in one-letter code: Dermonecrotic toxin SdSicTox-betaIIB1bi (274 aa).

H5 is an active-site residue. Positions 25 and 27 each coordinate Mg(2+). The active-site Nucleophile is the H41. Cystine bridges form between C45/C51 and C47/C190. A Mg(2+)-binding site is contributed by D85.

It belongs to the arthropod phospholipase D family. Class II subfamily. Requires Mg(2+) as cofactor. As to expression, expressed by the venom gland.

The protein resides in the secreted. It carries out the reaction an N-(acyl)-sphingosylphosphocholine = an N-(acyl)-sphingosyl-1,3-cyclic phosphate + choline. The catalysed reaction is an N-(acyl)-sphingosylphosphoethanolamine = an N-(acyl)-sphingosyl-1,3-cyclic phosphate + ethanolamine. It catalyses the reaction a 1-acyl-sn-glycero-3-phosphocholine = a 1-acyl-sn-glycero-2,3-cyclic phosphate + choline. The enzyme catalyses a 1-acyl-sn-glycero-3-phosphoethanolamine = a 1-acyl-sn-glycero-2,3-cyclic phosphate + ethanolamine. Its function is as follows. Dermonecrotic toxins cleave the phosphodiester linkage between the phosphate and headgroup of certain phospholipids (sphingolipid and lysolipid substrates), forming an alcohol (often choline) and a cyclic phosphate. This toxin acts on sphingomyelin (SM). It may also act on ceramide phosphoethanolamine (CPE), lysophosphatidylcholine (LPC) and lysophosphatidylethanolamine (LPE), but not on lysophosphatidylserine (LPS), and lysophosphatidylglycerol (LPG). It acts by transphosphatidylation, releasing exclusively cyclic phosphate products as second products. Induces dermonecrosis, hemolysis, increased vascular permeability, edema, inflammatory response, and platelet aggregation. This Sicarius cf. damarensis (strain GJB-2008) (Six-eyed sand spider) protein is Dermonecrotic toxin SdSicTox-betaIIB1bi.